Consider the following 521-residue polypeptide: Ribonuclease Y (521 aa).

The helical transmembrane segment at 5–25 (MMTMILAVIAAAIGFLIGNLL) threads the bilayer. A KH domain is found at 211 to 271 (TVSVVALPSD…VRREVAKLSL (61 aa)). Positions 337-430 (VYQHSLEVAF…VQAADALSGA (94 aa)) constitute an HD domain.

It belongs to the RNase Y family.

It localises to the cell membrane. Functionally, endoribonuclease that initiates mRNA decay. In Geotalea uraniireducens (strain Rf4) (Geobacter uraniireducens), this protein is Ribonuclease Y.